A 127-amino-acid chain; its full sequence is Spore germination protein 2 (127 aa).

Positions 1–25 are cleaved as a signal peptide; the sequence is MNIRNSLILIISTILFFSIINGSLS. Asn-54 and Asn-118 each carry an N-linked (GlcNAc...) asparagine glycan.

Belongs to the Dictyostelium gerABC family.

It localises to the secreted. This chain is Spore germination protein 2 (gerB), found in Dictyostelium discoideum (Social amoeba).